A 36-amino-acid chain; its full sequence is Delta-amaurobitoxin-Pl1c (36 aa).

Disulfide bonds link C3–C19, C10–C24, C18–C34, and C26–C32.

Expressed by the venom gland.

The protein resides in the secreted. Binds at site 4 of sodium channels (Nav) and inhibits the fast inactivation of cockroach channels. This toxin is active only on insects. Has a potent activity against S.litura larvae. The sequence is that of Delta-amaurobitoxin-Pl1c from Pireneitega luctuosa (Tangled nest spider).